The chain runs to 343 residues: 3-dehydroquinate synthase (343 aa).

NAD(+) is bound by residues 61–66 (SGEKYK), 95–99 (GVISD), 119–120 (TT), lysine 132, lysine 141, and 159–162 (FLKT). Zn(2+) contacts are provided by glutamate 174, histidine 231, and histidine 248.

Belongs to the sugar phosphate cyclases superfamily. Dehydroquinate synthase family. NAD(+) serves as cofactor. The cofactor is Co(2+). It depends on Zn(2+) as a cofactor.

It is found in the cytoplasm. The catalysed reaction is 7-phospho-2-dehydro-3-deoxy-D-arabino-heptonate = 3-dehydroquinate + phosphate. It participates in metabolic intermediate biosynthesis; chorismate biosynthesis; chorismate from D-erythrose 4-phosphate and phosphoenolpyruvate: step 2/7. In terms of biological role, catalyzes the conversion of 3-deoxy-D-arabino-heptulosonate 7-phosphate (DAHP) to dehydroquinate (DHQ). This is 3-dehydroquinate synthase from Helicobacter pylori (strain J99 / ATCC 700824) (Campylobacter pylori J99).